Reading from the N-terminus, the 201-residue chain is Large ribosomal subunit protein uL4 (201 aa).

The disordered stretch occupies residues 44 to 68 (KAQKTRSEVAGTTKKSKKQKGGGAR).

It belongs to the universal ribosomal protein uL4 family. In terms of assembly, part of the 50S ribosomal subunit.

Its function is as follows. One of the primary rRNA binding proteins, this protein initially binds near the 5'-end of the 23S rRNA. It is important during the early stages of 50S assembly. It makes multiple contacts with different domains of the 23S rRNA in the assembled 50S subunit and ribosome. Forms part of the polypeptide exit tunnel. In Xanthomonas campestris pv. campestris (strain 8004), this protein is Large ribosomal subunit protein uL4.